We begin with the raw amino-acid sequence, 302 residues long: Lipoyl synthase (302 aa).

[4Fe-4S] cluster-binding residues include cysteine 44, cysteine 49, cysteine 55, cysteine 70, cysteine 74, cysteine 77, and serine 283. The region spanning 56 to 272 (WSKKHATVMI…AKVARSKGFL (217 aa)) is the Radical SAM core domain.

This sequence belongs to the radical SAM superfamily. Lipoyl synthase family. Requires [4Fe-4S] cluster as cofactor.

The protein resides in the cytoplasm. It catalyses the reaction [[Fe-S] cluster scaffold protein carrying a second [4Fe-4S](2+) cluster] + N(6)-octanoyl-L-lysyl-[protein] + 2 oxidized [2Fe-2S]-[ferredoxin] + 2 S-adenosyl-L-methionine + 4 H(+) = [[Fe-S] cluster scaffold protein] + N(6)-[(R)-dihydrolipoyl]-L-lysyl-[protein] + 4 Fe(3+) + 2 hydrogen sulfide + 2 5'-deoxyadenosine + 2 L-methionine + 2 reduced [2Fe-2S]-[ferredoxin]. Its pathway is protein modification; protein lipoylation via endogenous pathway; protein N(6)-(lipoyl)lysine from octanoyl-[acyl-carrier-protein]: step 2/2. Functionally, catalyzes the radical-mediated insertion of two sulfur atoms into the C-6 and C-8 positions of the octanoyl moiety bound to the lipoyl domains of lipoate-dependent enzymes, thereby converting the octanoylated domains into lipoylated derivatives. This chain is Lipoyl synthase, found in Orientia tsutsugamushi (strain Boryong) (Rickettsia tsutsugamushi).